The chain runs to 251 residues: MVNAILSKKKKLVADGVFYAELNEFFTRELAEQGYAGVEVRKTPSKLEVIVKASNTQGVLGEQGRRIHELTSLIVKRFKLSPEGIAIYAERVEERGLSAAVQAEALKAKLLSGLPIRRAAYGVLRFAMGAGAKGVEVVISGKLRAARAKSQKYADGFMIHSGQPTRDFIDIAIRHVLMRQGVLGIKVKIMKDPAANRFGPRALPDAVKIAEAKDEDEVIPAPTVKSYKQTAEDETETDAPVEAEAEVEATA.

The 72-residue stretch at 22–93 (LNEFFTRELA…GIAIYAERVE (72 aa)) folds into the KH type-2 domain. The segment at 223 to 251 (TVKSYKQTAEDETETDAPVEAEAEVEATA) is disordered. The segment covering 232 to 251 (EDETETDAPVEAEAEVEATA) has biased composition (acidic residues).

It belongs to the universal ribosomal protein uS3 family. As to quaternary structure, component of the small ribosomal subunit. Mature ribosomes consist of a small (40S) and a large (60S) subunit. The 40S subunit contains about 32 different proteins and 1 molecule of RNA (18S). The 60S subunit contains 45 different proteins and 3 molecules of RNA (25S, 5.8S and 5S).

The protein resides in the cytoplasm. Its function is as follows. Component of the ribosome, a large ribonucleoprotein complex responsible for the synthesis of proteins in the cell. The small ribosomal subunit (SSU) binds messenger RNAs (mRNAs) and translates the encoded message by selecting cognate aminoacyl-transfer RNA (tRNA) molecules. The large subunit (LSU) contains the ribosomal catalytic site termed the peptidyl transferase center (PTC), which catalyzes the formation of peptide bonds, thereby polymerizing the amino acids delivered by tRNAs into a polypeptide chain. The nascent polypeptides leave the ribosome through a tunnel in the LSU and interact with protein factors that function in enzymatic processing, targeting, and the membrane insertion of nascent chains at the exit of the ribosomal tunnel. This is Small ribosomal subunit protein uS3 (RPS3) from Candida albicans (strain SC5314 / ATCC MYA-2876) (Yeast).